The following is a 346-amino-acid chain: 3-dehydroquinate synthase (346 aa).

NAD(+)-binding positions include 62 to 67 (DGEEYK), 96 to 100 (GVISD), 120 to 121 (TT), lysine 133, lysine 142, and 160 to 163 (FLRT). The Zn(2+) site is built by glutamate 175, histidine 234, and histidine 251.

Belongs to the sugar phosphate cyclases superfamily. Dehydroquinate synthase family. Requires Co(2+) as cofactor. It depends on Zn(2+) as a cofactor. NAD(+) serves as cofactor.

Its subcellular location is the cytoplasm. It catalyses the reaction 7-phospho-2-dehydro-3-deoxy-D-arabino-heptonate = 3-dehydroquinate + phosphate. Its pathway is metabolic intermediate biosynthesis; chorismate biosynthesis; chorismate from D-erythrose 4-phosphate and phosphoenolpyruvate: step 2/7. Functionally, catalyzes the conversion of 3-deoxy-D-arabino-heptulosonate 7-phosphate (DAHP) to dehydroquinate (DHQ). In Campylobacter curvus (strain 525.92), this protein is 3-dehydroquinate synthase.